The chain runs to 159 residues: Transcription elongation factor GreA (159 aa).

The stretch at 7–72 (MTVRGAEKLR…IQEIESKLSN (66 aa)) forms a coiled coil.

Belongs to the GreA/GreB family.

Functionally, necessary for efficient RNA polymerase transcription elongation past template-encoded arresting sites. The arresting sites in DNA have the property of trapping a certain fraction of elongating RNA polymerases that pass through, resulting in locked ternary complexes. Cleavage of the nascent transcript by cleavage factors such as GreA or GreB allows the resumption of elongation from the new 3'terminus. GreA releases sequences of 2 to 3 nucleotides. The sequence is that of Transcription elongation factor GreA from Buchnera aphidicola subsp. Schizaphis graminum (strain Sg).